Reading from the N-terminus, the 322-residue chain is Tetrahydromethanopterin S-methyltransferase subunit H (322 aa).

This sequence belongs to the MtrH family. In terms of assembly, the complex is composed of 8 subunits; MtrA, MtrB, MtrC, MtrD, MtrE, MtrF, MtrG and MtrH.

The enzyme catalyses 5-methyl-5,6,7,8-tetrahydromethanopterin + coenzyme M + 2 Na(+)(in) = 5,6,7,8-tetrahydromethanopterin + methyl-coenzyme M + 2 Na(+)(out). It participates in one-carbon metabolism; methanogenesis from CO(2); methyl-coenzyme M from 5,10-methylene-5,6,7,8-tetrahydromethanopterin: step 2/2. Part of a complex that catalyzes the formation of methyl-coenzyme M and tetrahydromethanopterin from coenzyme M and methyl-tetrahydromethanopterin. This is an energy-conserving, sodium-ion translocating step. MtrH catalyzes the transfer of the methyl group from methyl-tetrahydromethanopterin to the corrinoid prosthetic group of MtrA. The protein is Tetrahydromethanopterin S-methyltransferase subunit H of Methanopyrus kandleri (strain AV19 / DSM 6324 / JCM 9639 / NBRC 100938).